The following is a 174-amino-acid chain: Crossover junction endodeoxyribonuclease RuvC (174 aa).

Catalysis depends on residues Asp-8, Glu-69, and Asp-141. Mg(2+)-binding residues include Asp-8, Glu-69, and Asp-141.

The protein belongs to the RuvC family. In terms of assembly, homodimer which binds Holliday junction (HJ) DNA. The HJ becomes 2-fold symmetrical on binding to RuvC with unstacked arms; it has a different conformation from HJ DNA in complex with RuvA. In the full resolvosome a probable DNA-RuvA(4)-RuvB(12)-RuvC(2) complex forms which resolves the HJ. It depends on Mg(2+) as a cofactor.

The protein localises to the cytoplasm. The enzyme catalyses Endonucleolytic cleavage at a junction such as a reciprocal single-stranded crossover between two homologous DNA duplexes (Holliday junction).. Functionally, the RuvA-RuvB-RuvC complex processes Holliday junction (HJ) DNA during genetic recombination and DNA repair. Endonuclease that resolves HJ intermediates. Cleaves cruciform DNA by making single-stranded nicks across the HJ at symmetrical positions within the homologous arms, yielding a 5'-phosphate and a 3'-hydroxyl group; requires a central core of homology in the junction. The consensus cleavage sequence is 5'-(A/T)TT(C/G)-3'. Cleavage occurs on the 3'-side of the TT dinucleotide at the point of strand exchange. HJ branch migration catalyzed by RuvA-RuvB allows RuvC to scan DNA until it finds its consensus sequence, where it cleaves and resolves the cruciform DNA. In Xanthomonas euvesicatoria pv. vesicatoria (strain 85-10) (Xanthomonas campestris pv. vesicatoria), this protein is Crossover junction endodeoxyribonuclease RuvC.